Reading from the N-terminus, the 23-residue chain is Paralytic peptide 1 (23 aa).

A disulfide bridge connects residues Cys-7 and Cys-19.

This sequence belongs to the GBP/PSP1/paralytic peptide family. In terms of tissue distribution, hemolymph.

Functionally, causes rapid, rigid paralysis when injected into Lepidopteran larvae. The physiological role may be to reduce hemolymph loss following injury and promote wound healing. This is Paralytic peptide 1 from Manduca sexta (Tobacco hawkmoth).